Consider the following 294-residue polypeptide: Ribosomal protein L11 methyltransferase (294 aa).

Thr146, Gly167, Asp189, and Asn231 together coordinate S-adenosyl-L-methionine.

Belongs to the methyltransferase superfamily. PrmA family.

It is found in the cytoplasm. The enzyme catalyses L-lysyl-[protein] + 3 S-adenosyl-L-methionine = N(6),N(6),N(6)-trimethyl-L-lysyl-[protein] + 3 S-adenosyl-L-homocysteine + 3 H(+). Its function is as follows. Methylates ribosomal protein L11. This is Ribosomal protein L11 methyltransferase from Aliivibrio fischeri (strain ATCC 700601 / ES114) (Vibrio fischeri).